A 392-amino-acid chain; its full sequence is Galactokinase (392 aa).

The alpha-D-galactose site is built by Arg37, Glu43, His44, and Asp46. ATP contacts are provided by Gly136, Gly138, Ser140, and Ser141. Residue Asp186 participates in alpha-D-galactose binding. Asp186 acts as the Proton acceptor in catalysis. Residue Ser230 is modified to Phosphoserine. Tyr236 is a binding site for alpha-D-galactose.

The protein belongs to the GHMP kinase family. GalK subfamily. Homodimer.

It carries out the reaction alpha-D-galactose + ATP = alpha-D-galactose 1-phosphate + ADP + H(+). The protein operates within carbohydrate metabolism; galactose metabolism. In terms of biological role, catalyzes the transfer of a phosphate from ATP to alpha-D-galactose and participates in the first committed step in the catabolism of galactose. The sequence is that of Galactokinase from Homo sapiens (Human).